The chain runs to 1732 residues: Polycystin-1-like protein 3 (1732 aa).

Positions 1 to 23 are cleaved as a signal peptide; sequence MFFKGGSWLWLYIRTSIILGSEL. The Extracellular segment spans residues 24-697; it reads NSPAPHGQNN…IKLFLRVTNN (674 aa). The C-type lectin domain maps to 30–138; that stretch reads GQNNCYQLNR…CLLKYYFICQ (109 aa). 2 disulfides stabilise this stretch: C51-C137 and C112-C129. N-linked (GlcNAc...) asparagine glycosylation is found at N286, N363, N515, N537, and N575. In terms of domain architecture, GAIN-B spans 523–685; sequence TSLNMSTHQL…FVVPRTVNVE (163 aa). Disulfide bonds link C635-C663 and C650-C665. Residues 635–685 form a GPS region; it reads CYYWEIHNQTWSSAGCQVGPQSTILRTQCLCNHLTFFASDFFVVPRTVNVE. A helical transmembrane segment spans residues 698-718; it reads PVGVSLLASLLGFYVITVVWA. Topologically, residues 719–905 are cytoplasmic; the sequence is RKKDQADMQK…PWNQFTRVQR (187 aa). The region spanning 743–860 is the PLAT domain; sequence FHYLIQVYTG…GDCELDRVFI (118 aa). A helical membrane pass occupies residues 906-926; sequence LSCCMTLLLCNMVINVMFWKI. The Extracellular segment spans residues 927–939; sequence NSTTAKRDEQMRP. Residues 940-960 traverse the membrane as a helical segment; that stretch reads FAVAWSELLVSIHTAVILFPI. At 961-1154 the chain is on the cytoplasmic side; that stretch reads NLVIGRLFPL…ISNGLSKWLT (194 aa). The chain crosses the membrane as a helical span at residues 1155–1175; that stretch reads SVCWLLLGFTSLASAFFTALY. At 1176–1198 the chain is on the extracellular side; sequence SLELSKDQATSWMISIILSVLQN. Residues 1199–1219 form a helical membrane-spanning segment; it reads IFISQPVKVVFFTFLYSLMMS. The Cytoplasmic segment spans residues 1220 to 1289; it reads RMPRLNKENE…KLTGDILVQI (70 aa). The chain crosses the membrane as a helical span at residues 1290–1300; it reads LFLTLLMTAIY. Over 1301–1461 the chain is Extracellular; the sequence is SAKNSNRFYL…SFTSLQMSKK (161 aa). A helical membrane pass occupies residues 1462 to 1491; the sequence is GCVWSIISQVIYYLLVCYYAFIQGCQLKQQ. At 1492–1500 the chain is on the cytoplasmic side; it reads KWRFFTGKR. The chain crosses the membrane as a helical span at residues 1501–1519; it reads NILDTSIILISFILLGLDM. Residues 1520-1550 lie on the Extracellular side of the membrane; sequence KSISLHKKNMARYRDDQDRFISFYEAVKVNS. A helical membrane pass occupies residues 1551–1572; that stretch reads AATHLVGFPVLLATVQLWNLLR. Residues 1573–1589 are Cytoplasmic-facing; sequence HSPRLRVISRTLSRAWD. A helical transmembrane segment spans residues 1590-1614; that stretch reads EVVGFLLIILILLTGYAIAFNLLFG. A channel pore-region region spans residues 1613-1651; that stretch reads FGCSISDYRTFFSSAVTVVGLLMGISHQEEVFALDPVLG. Over 1615 to 1647 the chain is Extracellular; that stretch reads CSISDYRTFFSSAVTVVGLLMGISHQEEVFALD. The chain crosses the membrane as a helical span at residues 1648 to 1667; that stretch reads PVLGTFLILTSVILMVLVVI. The Cytoplasmic segment spans residues 1668-1732; that stretch reads NLFVSAILMA…SDTEVLDELP (65 aa).

It belongs to the polycystin family. In terms of assembly, heterotetramer with PKD2L1, composed of 3 subunit of PKD2L1 and 1 subunit of PKD1L3. Autoproteolytically processed at the GPS region of the GAIN-B domain; this cleavage modulates receptor activity. As to expression, highly expressed in placenta, weakly in heart and lung.

It is found in the cell membrane. The enzyme catalyses Ca(2+)(in) = Ca(2+)(out). The catalysed reaction is Na(+)(in) = Na(+)(out). It carries out the reaction K(+)(in) = K(+)(out). It catalyses the reaction Mg(2+)(in) = Mg(2+)(out). Its activity is regulated as follows. The non-selective cation channel is gated following an off-response property by acid: gated open after the removal of acid stimulus, but not during acid application. Regulation of non-selective cation channel activity by external Ca(2+) is bimodal, first sensitizing and subsequently inactivating the current. Its function is as follows. Pore-forming subunit of a heterotetrameric, non-selective cation channel that is permeable to Ca(2+). Also shows permeability towards NA(1+), K(+) and Mg(2+). Heterotetrameric complex channel is activated by external low pH and Ca(2+), but opens only when the extracellular pH rises again and after the removal of acid stimulus. May act as a sour taste receptor in gustatory cells; however, its contribution to sour taste perception is unclear in vivo and may be indirect. This chain is Polycystin-1-like protein 3, found in Homo sapiens (Human).